Here is a 274-residue protein sequence, read N- to C-terminus: Cytochrome b-c1 complex subunit Rieske, mitochondrial (274 aa).

The segment at 29 to 49 is disordered; that stretch reads XXXXXXXXTPEPPVLDPKRPI. Residues 79-103 are Mitochondrial matrix-facing; that stretch reads SHTDIKVPDFSDYRRSEVLDKTKSS. Residues 104 to 140 traverse the membrane as a helical segment; sequence RESSDARKVFSYMVTATTAVGVTYAAKSIVTQFISSM. At 141–274 the chain is on the mitochondrial intermembrane side; that stretch reads SASADVLAMS…FLSDDMVVVG (134 aa). The Rieske domain occupies 187 to 272; that stretch reads EAAVELSQLR…YEFLSDDMVV (86 aa). [2Fe-2S] cluster is bound by residues cysteine 217, histidine 219, cysteine 236, histidine 239, and serine 241. Cysteine 222 and cysteine 238 form a disulfide bridge.

This sequence belongs to the Rieske iron-sulfur protein family. In terms of assembly, component of the ubiquinol-cytochrome c oxidoreductase (cytochrome b-c1 complex, complex III, CIII), a multisubunit enzyme composed of 11 subunits. The complex is composed of 3 respiratory subunits cytochrome b, cytochrome c1 and Rieske protein UQCRFS1, 2 core protein subunits UQCRC1/QCR1 and UQCRC2/QCR2, and 6 low-molecular weight protein subunits UQCRH/QCR6, UQCRB/QCR7, UQCRQ/QCR8, UQCR10/QCR9, UQCR11/QCR10 and subunit 9, the cleavage product of Rieske protein UQCRFS1. The complex exists as an obligatory dimer and forms supercomplexes (SCs) in the inner mitochondrial membrane with NADH-ubiquinone oxidoreductase (complex I, CI) and cytochrome c oxidase (complex IV, CIV), resulting in different assemblies (supercomplex SCI(1)III(2)IV(1) and megacomplex MCI(2)III(2)IV(2)). Incorporation of the Rieske protein UQCRFS1 is the penultimate step in complex III assembly. Interacts with TTC19, which is involved in the clearance of UQCRFS1 fragments. Component of the ubiquinol-cytochrome c oxidoreductase (cytochrome b-c1 complex, complex III, CIII). Subunit 9 corresponds to the mitochondrial targeting sequence (MTS) of Rieske protein UQCRFS1. It is retained after processing and incorporated inside complex III, where it remains bound to the complex and localizes between the 2 core subunits UQCRC1/QCR1 and UQCRC2/QCR2. [2Fe-2S] cluster serves as cofactor. Proteolytic processing is necessary for the correct insertion of UQCRFS1 in the complex III dimer. Several fragments are generated during UQCRFS1 insertion, most probably due to the endogenous matrix-processing peptidase (MPP) activity of the 2 core protein subunits UQCRC1/QCR1 and UQCRC2/QCR2, which are homologous to the 2 mitochondrial-processing peptidase (MPP) subunits beta-MPP and alpha-MPP respectively. The action of the protease is also necessary for the clearance of the UQCRFS1 fragments.

The protein localises to the mitochondrion inner membrane. The catalysed reaction is a quinol + 2 Fe(III)-[cytochrome c](out) = a quinone + 2 Fe(II)-[cytochrome c](out) + 2 H(+)(out). Component of the ubiquinol-cytochrome c oxidoreductase, a multisubunit transmembrane complex that is part of the mitochondrial electron transport chain which drives oxidative phosphorylation. The respiratory chain contains 3 multisubunit complexes succinate dehydrogenase (complex II, CII), ubiquinol-cytochrome c oxidoreductase (cytochrome b-c1 complex, complex III, CIII) and cytochrome c oxidase (complex IV, CIV), that cooperate to transfer electrons derived from NADH and succinate to molecular oxygen, creating an electrochemical gradient over the inner membrane that drives transmembrane transport and the ATP synthase. The cytochrome b-c1 complex catalyzes electron transfer from ubiquinol to cytochrome c, linking this redox reaction to translocation of protons across the mitochondrial inner membrane, with protons being carried across the membrane as hydrogens on the quinol. In the process called Q cycle, 2 protons are consumed from the matrix, 4 protons are released into the intermembrane space and 2 electrons are passed to cytochrome c. The Rieske protein is a catalytic core subunit containing a [2Fe-2S] iron-sulfur cluster. It cycles between 2 conformational states during catalysis to transfer electrons from the quinol bound in the Q(0) site in cytochrome b to cytochrome c1. Incorporation of UQCRFS1 is the penultimate step in complex III assembly. Its function is as follows. Component of the ubiquinol-cytochrome c oxidoreductase (cytochrome b-c1 complex, complex III, CIII). UQCRFS1 undergoes proteolytic processing once it is incorporated in the complex III dimer. One of the fragments, called subunit 9, corresponds to its mitochondrial targeting sequence (MTS). The proteolytic processing is necessary for the correct insertion of UQCRFS1 in the complex III dimer, but the persistence of UQCRFS1-derived fragments may prevent newly imported UQCRFS1 to be processed and assembled into complex III and is detrimental for the complex III structure and function. This chain is Cytochrome b-c1 complex subunit Rieske, mitochondrial (UQCRFS1), found in Saimiri sciureus (Common squirrel monkey).